A 630-amino-acid chain; its full sequence is Protein phosphatase 2C-like domain-containing protein 1 (630 aa).

The 452-residue stretch at 170–621 folds into the PPM-type phosphatase domain; it reads GVGICEDRNS…DNITVMVIFL (452 aa). The segment covering 557–569 has biased composition (basic and acidic residues); it reads TTHRKPCSEKVTD. The tract at residues 557–578 is disordered; the sequence is TTHRKPCSEKVTDRPTSVNDVA.

This sequence belongs to the PP2C family.

In Homo sapiens (Human), this protein is Protein phosphatase 2C-like domain-containing protein 1 (PP2D1).